The following is a 185-amino-acid chain: Ribosome-recycling factor (185 aa).

It belongs to the RRF family.

The protein localises to the cytoplasm. Functionally, responsible for the release of ribosomes from messenger RNA at the termination of protein biosynthesis. May increase the efficiency of translation by recycling ribosomes from one round of translation to another. The sequence is that of Ribosome-recycling factor from Shewanella frigidimarina (strain NCIMB 400).